The sequence spans 512 residues: Cytochrome P450 26B1 (512 aa).

Cys-441 is a heme binding site.

The protein belongs to the cytochrome P450 family. Heme is required as a cofactor.

It is found in the endoplasmic reticulum membrane. The protein localises to the microsome membrane. It catalyses the reaction all-trans-retinoate + reduced [NADPH--hemoprotein reductase] + O2 = all-trans-4-hydroxyretinoate + oxidized [NADPH--hemoprotein reductase] + H2O + H(+). The catalysed reaction is all-trans-retinoate + reduced [NADPH--hemoprotein reductase] + O2 = all-trans-18-hydroxyretinoate + oxidized [NADPH--hemoprotein reductase] + H2O + H(+). Its function is as follows. A cytochrome P450 monooxygenase involved in the metabolism of retinoates (RAs), the active metabolites of vitamin A, and critical signaling molecules in animals. RAs exist as at least four different isomers: all-trans-RA (atRA), 9-cis-RA, 13-cis-RA, and 9,13-dicis-RA, where atRA is considered to be the biologically active isomer, although 9-cis-RA and 13-cis-RA also have activity. Catalyzes the hydroxylation of atRA primarily at C-4 and C-18, thereby contributing to the regulation of atRA homeostasis and signaling. Hydroxylation of atRA limits its biological activity and initiates a degradative process leading to its eventual elimination. Involved in the convertion of atRA to all-trans-4-oxo-RA. Can oxidize all-trans-13,14-dihydroretinoate (DRA) to metabolites which could include all-trans-4-oxo-DRA, all-trans-4-hydroxy-DRA, all-trans-5,8-epoxy-DRA, and all-trans-18-hydroxy-DRA. Shows preference for the following substrates: atRA &gt; 9-cis-RA &gt; 13-cis-RA. Plays a central role in germ cell development: acts by degrading RAs in the developing testis, preventing STRA8 expression, thereby leading to delay of meiosis. Required for the maintenance of the undifferentiated state of male germ cells during embryonic development in Sertoli cells, inducing arrest in G0 phase of the cell cycle and preventing meiotic entry. Plays a role in skeletal development, both at the level of patterning and in the ossification of bone and the establishment of some synovial joints. Essential for postnatal survival. In terms of biological role, also has a significant activity in oxidation of tazarotenic acid and may therefore metabolize that xenobiotic in vivo. The chain is Cytochrome P450 26B1 (Cyp26b1) from Mus musculus (Mouse).